Reading from the N-terminus, the 291-residue chain is Prepilin leader peptidase/N-methyltransferase (291 aa).

Residues 14–34 (LYFSLVFLFSLMIGSFLNVVI) traverse the membrane as a helical segment. Positions 75, 78, 100, and 103 each coordinate Zn(2+). Helical transmembrane passes span 107 to 127 (ISAR…VVAM), 131 to 151 (PGWG…LTFI), 162 to 182 (LTLP…YVPL), 186 to 206 (VIGA…FKLL), 232 to 252 (LPIV…GLIL), and 262 to 282 (IPFG…GDSI).

Belongs to the peptidase A24 family. Requires Zn(2+) as cofactor.

The protein resides in the cell inner membrane. The enzyme catalyses Typically cleaves a -Gly-|-Phe- bond to release an N-terminal, basic peptide of 5-8 residues from type IV prepilin, and then N-methylates the new N-terminal amino group, the methyl donor being S-adenosyl-L-methionine.. Functionally, plays an essential role in type IV pili and type II pseudopili formation by proteolytically removing the leader sequence from substrate proteins and subsequently monomethylating the alpha-amino group of the newly exposed N-terminal phenylalanine. The protein is Prepilin leader peptidase/N-methyltransferase (tapD) of Aeromonas salmonicida (strain A449).